The following is a 1488-amino-acid chain: Phenolphthiocerol/phthiocerol polyketide synthase subunit E (1488 aa).

The Ketosynthase family 3 (KS3) domain occupies 5 to 438; sequence ENAIAVVGMA…GTNAHVVLEE (434 aa). Residues C184, H320, and H361 each act as for beta-ketoacyl synthase activity in the active site. The interval 551 to 868 is acyltransferase; sequence VFLFPGQGAQ…GELWSAGVEV (318 aa). The active-site For malonyltransferase activity is S641. Residues 930-1004 form the Carrier domain; it reads NGESQTEVTL…SLTAAVDASF (75 aa). S965 bears the O-(pantetheine 4'-phosphoryl)serine mark. Position 1286–1331 (1286–1331) interacts with NADP(+); that stretch reads EGVVAVELEGEGRSVLRPDVDLRRTVGWFTTYYPVPLACATGLGAL.

NADP(+) is required as a cofactor. The cofactor is pantetheine 4'-phosphate.

The enzyme catalyses icosanoyl-[(phenol)carboxyphthiodiolenone synthase] + 2 (S)-methylmalonyl-CoA + 3 malonyl-CoA + 5 NADPH + 10 H(+) = C32-carboxyphthiodiolenone-[(phenol)carboxyphthiodiolenone synthase] + 5 CO2 + 5 NADP(+) + 5 CoA + 2 H2O. The catalysed reaction is docosanoyl-[(phenol)carboxyphthiodiolenone synthase] + 2 (S)-methylmalonyl-CoA + 3 malonyl-CoA + 5 NADPH + 10 H(+) = C34-carboxyphthiodiolenone-[(phenol)carboxyphthiodiolenone synthase] + 5 CO2 + 5 NADP(+) + 5 CoA + 2 H2O. It catalyses the reaction 17-(4-hydroxyphenyl)heptadecanoyl-[(phenol)carboxyphthiodiolenone synthase] + 2 (S)-methylmalonyl-CoA + 3 malonyl-CoA + 5 NADPH + 10 H(+) = C35-(phenol)carboxyphthiodiolenone-[(phenol)carboxyphthiodiolenone synthase] + 5 CO2 + 5 NADP(+) + 5 CoA + 2 H2O. It carries out the reaction 19-(4-hydroxyphenyl)nonadecanoyl-[(phenol)carboxyphthiodiolenone synthase] + 2 (S)-methylmalonyl-CoA + 3 malonyl-CoA + 5 NADPH + 10 H(+) = C37-(phenol)carboxyphthiodiolenone-[(phenol)carboxyphthiodiolenone synthase] + 5 CO2 + 5 NADP(+) + 5 CoA + 2 H2O. The protein operates within lipid metabolism; fatty acid biosynthesis. In terms of biological role, part of the PpsABCDE complex involved in the biosynthesis of the lipid core common to phthiocerols and phenolphthiocerols by successive additions of malonyl-CoA or methylmalonyl-CoA extender units. PpsA can accept as substrate the activated forms of either icosanoyl (C20), docosanoyl (C22) or lignoceroyl (C24) groups from FadD26, or a (4-hydroxyphenyl)-C17 or (4-hydroxyphenyl)-C19 fatty acyl from FadD29. PpsA initiates the biosynthesis and extends its substrate using a malonyl-CoA extender unit. The PpsB and PpsC proteins add the second and third malonyl-CoA extender units. PpsD adds an (R)-methylmalonyl unit and PpsE adds a second (R)-methylmalonyl unit. The incorporation of the methylmalonyl units results in formation of two branched methyl groups in the elongated product. This chain is Phenolphthiocerol/phthiocerol polyketide synthase subunit E (ppsE), found in Mycobacterium bovis (strain ATCC BAA-935 / AF2122/97).